A 150-amino-acid chain; its full sequence is MAKIILRHLIEIPVRYQEEFEARGLEDCRLDHALYALPGPTIVDLRKTRAAQSPPVDSAAETPPREGKSHFQILLDVVQFLPEDIIIQTFEGWLLIKAQHGTRMDEHGFISRSFTRQYKLPDGVEIKDLSAVLCHDGILVVEVKDPVGTK.

Residues 47–150 (KTRAAQSPPV…VEVKDPVGTK (104 aa)) enclose the sHSP domain.

Belongs to the small heat shock protein (HSP20) family.

The protein resides in the cytoplasm. It localises to the nucleus. Its function is as follows. Inhibitor of actin polymerization. This Homo sapiens (Human) protein is Heat shock protein beta-3 (HSPB3).